The chain runs to 375 residues: 23S rRNA (uracil(747)-C(5))-methyltransferase RlmC (375 aa).

[4Fe-4S] cluster-binding residues include Cys-3, Cys-11, Cys-14, and Cys-87. S-adenosyl-L-methionine contacts are provided by Gln-212, Phe-241, Glu-262, and Asn-307. The active-site Nucleophile is Cys-334.

Belongs to the class I-like SAM-binding methyltransferase superfamily. RNA M5U methyltransferase family. RlmC subfamily.

It carries out the reaction uridine(747) in 23S rRNA + S-adenosyl-L-methionine = 5-methyluridine(747) in 23S rRNA + S-adenosyl-L-homocysteine + H(+). Its function is as follows. Catalyzes the formation of 5-methyl-uridine at position 747 (m5U747) in 23S rRNA. The sequence is that of 23S rRNA (uracil(747)-C(5))-methyltransferase RlmC from Shigella flexneri serotype 5b (strain 8401).